The following is a 170-amino-acid chain: Acireductone dioxygenase (170 aa).

Residues His99, His101, Glu105, and His144 each coordinate Fe(2+). Ni(2+) contacts are provided by His99, His101, Glu105, and His144.

This sequence belongs to the acireductone dioxygenase (ARD) family. As to quaternary structure, monomer. Requires Fe(2+) as cofactor. Ni(2+) is required as a cofactor.

It catalyses the reaction 1,2-dihydroxy-5-(methylsulfanyl)pent-1-en-3-one + O2 = 3-(methylsulfanyl)propanoate + CO + formate + 2 H(+). The enzyme catalyses 1,2-dihydroxy-5-(methylsulfanyl)pent-1-en-3-one + O2 = 4-methylsulfanyl-2-oxobutanoate + formate + 2 H(+). It functions in the pathway amino-acid biosynthesis; L-methionine biosynthesis via salvage pathway; L-methionine from S-methyl-5-thio-alpha-D-ribose 1-phosphate: step 5/6. Catalyzes 2 different reactions between oxygen and the acireductone 1,2-dihydroxy-3-keto-5-methylthiopentene (DHK-MTPene) depending upon the metal bound in the active site. Fe-containing acireductone dioxygenase (Fe-ARD) produces formate and 2-keto-4-methylthiobutyrate (KMTB), the alpha-ketoacid precursor of methionine in the methionine recycle pathway. Ni-containing acireductone dioxygenase (Ni-ARD) produces methylthiopropionate, carbon monoxide and formate, and does not lie on the methionine recycle pathway. The chain is Acireductone dioxygenase from Bacillus anthracis.